A 473-amino-acid polypeptide reads, in one-letter code: BTB/POZ domain-containing protein KCTD8 (473 aa).

The tract at residues 1–36 (MALKDTGSGGSTILPISEMVSSSSSPGASAAAAPGP) is disordered. A compositionally biased stretch (low complexity) spans 21–35 (SSSSSPGASAAAAPG). Positions 44–122 (EVVELNVGGQ…LRDKQLALPE (79 aa)) constitute a BTB domain. S78 is modified (phosphoserine). R80 carries the omega-N-methylarginine modification. The disordered stretch occupies residues 326 to 409 (IVSPKQEHED…WIPPPDKRRN (84 aa)). Residues 330-346 (KQEHEDRKHDKVTDKGS) are compositionally biased toward basic and acidic residues. Residues 347–388 (ESGTSCNELSTSSCDSHSEASTPQDNPSSAQQATAHQPNTLT) are compositionally biased toward polar residues. Phosphoserine is present on S410.

Interacts as a tetramer with GABRB1 and GABRB2.

The protein resides in the presynaptic cell membrane. It localises to the postsynaptic cell membrane. In terms of biological role, auxiliary subunit of GABA-B receptors that determine the pharmacology and kinetics of the receptor response. Increases agonist potency and markedly alter the G-protein signaling of the receptors by accelerating onset and promoting desensitization. The polypeptide is BTB/POZ domain-containing protein KCTD8 (KCTD8) (Homo sapiens (Human)).